We begin with the raw amino-acid sequence, 227 residues long: Enolase-phosphatase E1 (227 aa).

Mg(2+) is bound by residues Asp-11 and Glu-13. Substrate contacts are provided by residues 118–119 (SS) and Lys-161. Asp-186 lines the Mg(2+) pocket.

It belongs to the HAD-like hydrolase superfamily. MasA/MtnC family. Monomer. Requires Mg(2+) as cofactor.

The protein localises to the cytoplasm. It is found in the nucleus. The enzyme catalyses 5-methylsulfanyl-2,3-dioxopentyl phosphate + H2O = 1,2-dihydroxy-5-(methylsulfanyl)pent-1-en-3-one + phosphate. It functions in the pathway amino-acid biosynthesis; L-methionine biosynthesis via salvage pathway; L-methionine from S-methyl-5-thio-alpha-D-ribose 1-phosphate: step 3/6. It participates in amino-acid biosynthesis; L-methionine biosynthesis via salvage pathway; L-methionine from S-methyl-5-thio-alpha-D-ribose 1-phosphate: step 4/6. Bifunctional enzyme that catalyzes the enolization of 2,3-diketo-5-methylthiopentyl-1-phosphate (DK-MTP-1-P) into the intermediate 2-hydroxy-3-keto-5-methylthiopentenyl-1-phosphate (HK-MTPenyl-1-P), which is then dephosphorylated to form the acireductone 1,2-dihydroxy-3-keto-5-methylthiopentene (DHK-MTPene). This is Enolase-phosphatase E1 from Saccharomyces cerevisiae (strain ATCC 204508 / S288c) (Baker's yeast).